A 451-amino-acid chain; its full sequence is TERF1-interacting nuclear factor 2 (451 aa).

A2 carries the N-acetylalanine modification. The segment at 229 to 257 is disordered; it reads NPLPKAKPGTHLPQGPSSRTHPEPLAGRH. A TBM motif is present at residues 256–278; the sequence is RHFNLAPLGRRRVQSQWASTRGG. A Nuclear localization signal motif is present at residues 262–268; that stretch reads PLGRRRV. Position 295 is a phosphoserine (S295). Residues K302, K306, K341, and K353 each participate in a glycyl lysine isopeptide (Lys-Gly) (interchain with G-Cter in SUMO2) cross-link.

Monomer. Found in a complex with POT1; TERF1 and TNKS1. Component of the shelterin complex (telosome) composed of TERF1, TERF2, TINF2, TERF2IP ACD and POT1. Interacts with TERF1, TERF2 and ACD. As to expression, detected in heart, brain, placenta, lung, liver, skeletal muscle, kidney and pancreas.

The protein resides in the nucleus. It is found in the chromosome. It localises to the telomere. Its subcellular location is the nucleus matrix. Functionally, component of the shelterin complex (telosome) that is involved in the regulation of telomere length and protection. Shelterin associates with arrays of double-stranded TTAGGG repeats added by telomerase and protects chromosome ends; without its protective activity, telomeres are no longer hidden from the DNA damage surveillance and chromosome ends are inappropriately processed by DNA repair pathways. Plays a role in shelterin complex assembly. Isoform 1 may have additional role in tethering telomeres to the nuclear matrix. This is TERF1-interacting nuclear factor 2 (TINF2) from Homo sapiens (Human).